The chain runs to 143 residues: Endoribonuclease YbeY (143 aa).

Zn(2+) is bound by residues His113, His117, and Asp123.

This sequence belongs to the endoribonuclease YbeY family. It depends on Zn(2+) as a cofactor.

The protein localises to the cytoplasm. Functionally, single strand-specific metallo-endoribonuclease involved in late-stage 70S ribosome quality control and in maturation of the 3' terminus of the 16S rRNA. The polypeptide is Endoribonuclease YbeY (Elusimicrobium minutum (strain Pei191)).